A 110-amino-acid chain; its full sequence is Minor capsid protein VP2 (110 aa).

Belongs to the vesivirus VP2 protein family. Homooligomer. The portal-like structure consists in 12 copies of VP2. Interacts with capsid protein VP1.

The protein localises to the virion. It localises to the host cytoplasm. Its function is as follows. Minor structural protein that forms a portal-like structure at a unique three-fold axis of symmetry, following binding to the host receptor. The channel formed by VP2 may allow the delivery of the viral genome through the host endosomal membrane. This Vesicular exanthema of swine virus serotype A48 (isolate Swine/United States/A48/1948) (VESV) protein is Minor capsid protein VP2.